A 127-amino-acid chain; its full sequence is Protein ApaG (127 aa).

One can recognise an ApaG domain in the interval 3-127 (EGKKYEIAVK…FILSVPRILH (125 aa)).

The polypeptide is Protein ApaG (Nitrosospira multiformis (strain ATCC 25196 / NCIMB 11849 / C 71)).